A 727-amino-acid chain; its full sequence is NADH-ubiquinone oxidoreductase 75 kDa subunit, mitochondrial (727 aa).

The N-terminal 23 residues, 1-23 (MLRIPIKRALIGLSNSPKGYVRT), are a transit peptide targeting the mitochondrion. Positions 30–108 (NLIEVFVDGQ…GWNILTNSEK (79 aa)) constitute a 2Fe-2S ferredoxin-type domain. 3 residues coordinate [2Fe-2S] cluster: Cys-64, Cys-75, and Cys-78. Lys-84 carries the post-translational modification N6-acetyllysine. Cys-92 is a [2Fe-2S] cluster binding site. The 4Fe-4S His(Cys)3-ligated-type domain occupies 108 to 147 (KSKKAREGVMEFLLANHPLDCPICDQGGECDLQDQSMMFG). Residues His-124, Cys-128, Cys-131, Cys-137, Cys-176, Cys-179, Cys-182, and Cys-226 each contribute to the [4Fe-4S] cluster site. The region spanning 245 to 301 (TRKTESIDVMDAVGSNIVVSTRTGEVMRILPRMHEDINEEWISDKTRFAYDGLKRQR) is the 4Fe-4S Mo/W bis-MGD-type domain. Ser-461 carries the post-translational modification Phosphoserine. An N6-acetyllysine mark is found at Lys-467, Lys-499, and Lys-709.

It belongs to the complex I 75 kDa subunit family. As to quaternary structure, core subunit of respiratory chain NADH dehydrogenase (Complex I) which is composed of 45 different subunits. This is the largest subunit of complex I and it is a component of the iron-sulfur (IP) fragment of the enzyme. Complex I associates with ubiquinol-cytochrome reductase complex (Complex III) to form supercomplexes. In astrocytes, less complex I is assembled into supercomplexes as compared to neurons. Interacts with MDM2. Interacts with AKAP1. [2Fe-2S] cluster serves as cofactor. The cofactor is [4Fe-4S] cluster. In terms of processing, acetylation of Lys-84 is observed in liver mitochondria from fasted mice but not from fed mice. In terms of tissue distribution, brain. More abundant in neurons than in astrocytes (at protein level).

It is found in the mitochondrion inner membrane. The enzyme catalyses a ubiquinone + NADH + 5 H(+)(in) = a ubiquinol + NAD(+) + 4 H(+)(out). Its function is as follows. Core subunit of the mitochondrial membrane respiratory chain NADH dehydrogenase (Complex I) which catalyzes electron transfer from NADH through the respiratory chain, using ubiquinone as an electron acceptor. Essential for catalysing the entry and efficient transfer of electrons within complex I. Plays a key role in the assembly and stability of complex I and participates in the association of complex I with ubiquinol-cytochrome reductase complex (Complex III) to form supercomplexes. The chain is NADH-ubiquinone oxidoreductase 75 kDa subunit, mitochondrial (Ndufs1) from Mus musculus (Mouse).